The sequence spans 200 residues: Small ribosomal subunit protein uS4 (200 aa).

An S4 RNA-binding domain is found at Ser94–Val157.

Belongs to the universal ribosomal protein uS4 family. In terms of assembly, part of the 30S ribosomal subunit. Contacts protein S5. The interaction surface between S4 and S5 is involved in control of translational fidelity.

Functionally, one of the primary rRNA binding proteins, it binds directly to 16S rRNA where it nucleates assembly of the body of the 30S subunit. With S5 and S12 plays an important role in translational accuracy. This Metamycoplasma arthritidis (strain 158L3-1) (Mycoplasma arthritidis) protein is Small ribosomal subunit protein uS4.